The sequence spans 610 residues: Protein arginine N-methyltransferase 5 (610 aa).

Positions 284–587 constitute an SAM-dependent MTase PRMT-type domain; that stretch reads LEIPLQPLCD…VDATKVWYEW (304 aa). Tyr300 is a binding site for S-adenosyl-L-methionine. An a protein-binding site is contributed by Phe303. Residues 309-310, Glu368, and 396-397 each bind S-adenosyl-L-methionine; these read KY and DM. Glu412 and Glu421 together coordinate a protein. Residues Glu412 and Glu421 each act as proton donor/acceptor in the active site. The segment at 470-610 is interaction with vls; sequence AFDYGYVSLL…TRGTGYNMRL (141 aa).

Belongs to the class I-like SAM-binding methyltransferase superfamily. Protein arginine N-methyltransferase family. As to quaternary structure, interacts with vls. Expressed only in ovaries.

It localises to the cytoplasm. Functionally, arginine methyltransferase that can both catalyze the formation of omega-N monomethylarginine (MMA) and symmetrical dimethylarginine (sDMA). Specifically mediates the symmetrical dimethylation of arginine residues in the small nuclear ribonucleoproteins SmD1 and SmD3. Required for arginine symmetrical dimethylation of piwi family proteins, piwi, aub and AGO3, during germline development. Required during oogenesis for pole cell formation in the pathway controlled by oskar (osk) and for abdominal segments during early embryogenesis. Involved in nanos (nos) and germ cell mRNAs localization. The polypeptide is Protein arginine N-methyltransferase 5 (Drosophila melanogaster (Fruit fly)).